We begin with the raw amino-acid sequence, 342 residues long: NLP effector protein Pc107869 (342 aa).

The N-terminal stretch at Met1–Ala19 is a signal peptide. An N-linked (GlcNAc...) asparagine glycan is attached at Asn24. The disordered stretch occupies residues Ala41 to Ala125. Over residues Gln55–Pro75 the composition is skewed to low complexity. The segment covering Thr93–Gly121 has biased composition (pro residues). The Hepta-peptide GHRHDWE motif motif lies at Gly226–Glu232.

Belongs to the Necrosis inducing protein (NPP1) family.

The protein localises to the secreted. Secreted effector that contributes strongly to virulence during infection by P.capsici. Induces cell death in the Solanaceae, including Nicotiana benthamiana. The chain is NLP effector protein Pc107869 from Phytophthora capsici.